A 291-amino-acid chain; its full sequence is Phosphate import ATP-binding protein PstB (291 aa).

Residues 44–286 (VKAREVNVFY…PEEKRTQDYI (243 aa)) form the ABC transporter domain. 76-83 (GPSGCGKS) provides a ligand contact to ATP.

This sequence belongs to the ABC transporter superfamily. Phosphate importer (TC 3.A.1.7) family. As to quaternary structure, the complex is composed of two ATP-binding proteins (PstB), two transmembrane proteins (PstC and PstA) and a solute-binding protein (PstS).

Its subcellular location is the cell inner membrane. The catalysed reaction is phosphate(out) + ATP + H2O = ADP + 2 phosphate(in) + H(+). In terms of biological role, part of the ABC transporter complex PstSACB involved in phosphate import. Responsible for energy coupling to the transport system. The polypeptide is Phosphate import ATP-binding protein PstB (Chelativorans sp. (strain BNC1)).